A 545-amino-acid polypeptide reads, in one-letter code: Ubiquitin carboxyl-terminal hydrolase 17-like protein D (545 aa).

A USP domain is found at 51-348 (CGLQNTGNSC…NAYVLFYVQQ (298 aa)). Catalysis depends on cysteine 60, which acts as the Nucleophile. Histidine 307 acts as the Proton acceptor in catalysis. 2 disordered regions span residues 367–443 (LDPE…KLGQ) and 521–545 (RQEG…LLVR). The segment covering 374–385 (KKSRRKKHKKKS) has biased composition (basic residues). Positions 393-404 (EPSKNREKKATK) are enriched in basic and acidic residues. A compositionally biased stretch (basic residues) spans 524–537 (GRRRSKKGKNKNKQ).

This sequence belongs to the peptidase C19 family. USP17 subfamily. As to expression, detected in T-cell, myeloid, and embryonic stem cell lines.

The protein localises to the nucleus. The protein resides in the endoplasmic reticulum. The catalysed reaction is Thiol-dependent hydrolysis of ester, thioester, amide, peptide and isopeptide bonds formed by the C-terminal Gly of ubiquitin (a 76-residue protein attached to proteins as an intracellular targeting signal).. Its function is as follows. Deubiquitinating enzyme that removes conjugated ubiquitin from specific proteins to regulate different cellular processes that may include cell proliferation, progression through the cell cycle, apoptosis, cell migration, and the cellular response to viral infection. This is Ubiquitin carboxyl-terminal hydrolase 17-like protein D from Mus musculus (Mouse).